We begin with the raw amino-acid sequence, 197 residues long: Protein jagunal (197 aa).

The Cytoplasmic segment spans residues M1–Y39. A helical transmembrane segment spans residues C40–L60. Over D61–P78 the chain is Lumenal. A helical transmembrane segment spans residues L79–A99. The Cytoplasmic segment spans residues R100–K109. A helical membrane pass occupies residues Y110–F130. Residues S131–G159 lie on the Lumenal side of the membrane. The chain crosses the membrane as a helical span at residues V160–A180. At Y181–Q197 the chain is on the cytoplasmic side.

Belongs to the jagunal family.

Its subcellular location is the endoplasmic reticulum membrane. Functionally, required for endoplasmic reticulum organization and proper vesicular traffic during vitellogenesis. Required for oocyte and bristle growth. The polypeptide is Protein jagunal (Drosophila pseudoobscura pseudoobscura (Fruit fly)).